Reading from the N-terminus, the 86-residue chain is Small ribosomal subunit protein uS17 (86 aa).

The protein belongs to the universal ribosomal protein uS17 family. As to quaternary structure, part of the 30S ribosomal subunit.

Its function is as follows. One of the primary rRNA binding proteins, it binds specifically to the 5'-end of 16S ribosomal RNA. The chain is Small ribosomal subunit protein uS17 from Caldicellulosiruptor bescii (strain ATCC BAA-1888 / DSM 6725 / KCTC 15123 / Z-1320) (Anaerocellum thermophilum).